A 433-amino-acid chain; its full sequence is ATP-dependent protease ATPase subunit HslU (433 aa).

Residues Ile18, 60–65, Asp246, Glu311, and Arg383 each bind ATP; that span reads GVGKTE.

It belongs to the ClpX chaperone family. HslU subfamily. In terms of assembly, a double ring-shaped homohexamer of HslV is capped on each side by a ring-shaped HslU homohexamer. The assembly of the HslU/HslV complex is dependent on binding of ATP.

It is found in the cytoplasm. In terms of biological role, ATPase subunit of a proteasome-like degradation complex; this subunit has chaperone activity. The binding of ATP and its subsequent hydrolysis by HslU are essential for unfolding of protein substrates subsequently hydrolyzed by HslV. HslU recognizes the N-terminal part of its protein substrates and unfolds these before they are guided to HslV for hydrolysis. The sequence is that of ATP-dependent protease ATPase subunit HslU from Cereibacter sphaeroides (strain ATCC 17029 / ATH 2.4.9) (Rhodobacter sphaeroides).